The sequence spans 669 residues: DNA mismatch repair protein MutL (669 aa).

Residues 361 to 409 (ENVFSQPYQAPVTSSTQKKSTGAYQGSAGKGLTDTQKSPQKTLDTRQFG) are disordered. 2 stretches are compositionally biased toward polar residues: residues 363-384 (VFSQPYQAPVTSSTQKKSTGAY) and 393-402 (TDTQKSPQKT).

This sequence belongs to the DNA mismatch repair MutL/HexB family.

In terms of biological role, this protein is involved in the repair of mismatches in DNA. It is required for dam-dependent methyl-directed DNA mismatch repair. May act as a 'molecular matchmaker', a protein that promotes the formation of a stable complex between two or more DNA-binding proteins in an ATP-dependent manner without itself being part of a final effector complex. The protein is DNA mismatch repair protein MutL of Proteus mirabilis (strain HI4320).